The chain runs to 305 residues: Phosphopantetheine adenylyltransferase (305 aa).

Belongs to the eukaryotic CoaD family.

The protein localises to the cytoplasm. It is found in the nucleus. It catalyses the reaction (R)-4'-phosphopantetheine + ATP + H(+) = 3'-dephospho-CoA + diphosphate. Functionally, reversibly transfers an adenylyl group from ATP to 4'-phosphopantetheine, yielding dephospho-CoA (dPCoA) and pyrophosphate. Plays a role in the physiological regulation of the intracellular CoA concentration. This chain is Phosphopantetheine adenylyltransferase (CAB4), found in Saccharomyces cerevisiae (strain ATCC 204508 / S288c) (Baker's yeast).